A 698-amino-acid polypeptide reads, in one-letter code: Elongation factor G (698 aa).

One can recognise a tr-type G domain in the interval 8 to 290 (ERYRNIGISA…AVIELLPSPT (283 aa)). GTP is bound by residues 17–24 (AHIDAGKT), 88–92 (DTPGH), and 142–145 (NKMD).

The protein belongs to the TRAFAC class translation factor GTPase superfamily. Classic translation factor GTPase family. EF-G/EF-2 subfamily.

The protein localises to the cytoplasm. Functionally, catalyzes the GTP-dependent ribosomal translocation step during translation elongation. During this step, the ribosome changes from the pre-translocational (PRE) to the post-translocational (POST) state as the newly formed A-site-bound peptidyl-tRNA and P-site-bound deacylated tRNA move to the P and E sites, respectively. Catalyzes the coordinated movement of the two tRNA molecules, the mRNA and conformational changes in the ribosome. This chain is Elongation factor G, found in Chromobacterium violaceum (strain ATCC 12472 / DSM 30191 / JCM 1249 / CCUG 213 / NBRC 12614 / NCIMB 9131 / NCTC 9757 / MK).